The chain runs to 284 residues: Probable endonuclease 4 (284 aa).

9 residues coordinate Zn(2+): H66, H106, E142, D176, H179, H213, D226, H228, and E258.

Belongs to the AP endonuclease 2 family. Zn(2+) serves as cofactor.

The enzyme catalyses Endonucleolytic cleavage to 5'-phosphooligonucleotide end-products.. In terms of biological role, endonuclease IV plays a role in DNA repair. It cleaves phosphodiester bonds at apurinic or apyrimidinic (AP) sites, generating a 3'-hydroxyl group and a 5'-terminal sugar phosphate. The chain is Probable endonuclease 4 from Natranaerobius thermophilus (strain ATCC BAA-1301 / DSM 18059 / JW/NM-WN-LF).